A 93-amino-acid polypeptide reads, in one-letter code: MPRSVKKGPIVASHLLAKIEKQKNLKNKKVIQTWSRSSTITPIFVGHKIAVYNGREHIPVYITENMVGHKLGEFSPTRTYRGHNKKDKKMQKK.

Positions 72–93 (GEFSPTRTYRGHNKKDKKMQKK) are disordered. Basic residues predominate over residues 80–93 (YRGHNKKDKKMQKK).

The protein belongs to the universal ribosomal protein uS19 family.

Its function is as follows. Protein S19 forms a complex with S13 that binds strongly to the 16S ribosomal RNA. The sequence is that of Small ribosomal subunit protein uS19 from Aster yellows witches'-broom phytoplasma (strain AYWB).